We begin with the raw amino-acid sequence, 304 residues long: N-acetylmuramic acid 6-phosphate etherase (304 aa).

The SIS domain occupies 58–221; it reads IAERIHRGGR…STGVMIKLGK (164 aa). The Proton donor role is filled by E86. The active site involves E117.

It belongs to the GCKR-like family. MurNAc-6-P etherase subfamily. Homodimer.

It carries out the reaction N-acetyl-D-muramate 6-phosphate + H2O = N-acetyl-D-glucosamine 6-phosphate + (R)-lactate. It participates in amino-sugar metabolism; N-acetylmuramate degradation. Functionally, specifically catalyzes the cleavage of the D-lactyl ether substituent of MurNAc 6-phosphate, producing GlcNAc 6-phosphate and D-lactate. This chain is N-acetylmuramic acid 6-phosphate etherase, found in Clostridium beijerinckii (strain ATCC 51743 / NCIMB 8052) (Clostridium acetobutylicum).